Consider the following 278-residue polypeptide: Large ribosomal subunit protein uL2 (278 aa).

Residues 201-278 form a disordered region; sequence HGNINDGKAG…IMRSRHQRKK (78 aa). A compositionally biased stretch (basic residues) spans 210–221; that stretch reads GRSRWRGKRPHV.

The protein belongs to the universal ribosomal protein uL2 family. Part of the 50S ribosomal subunit. Forms a bridge to the 30S subunit in the 70S ribosome.

Functionally, one of the primary rRNA binding proteins. Required for association of the 30S and 50S subunits to form the 70S ribosome, for tRNA binding and peptide bond formation. It has been suggested to have peptidyltransferase activity; this is somewhat controversial. Makes several contacts with the 16S rRNA in the 70S ribosome. The polypeptide is Large ribosomal subunit protein uL2 (Sinorhizobium fredii (strain NBRC 101917 / NGR234)).